The sequence spans 471 residues: E3 SUMO-protein ligase EGR2 (471 aa).

Residues 127 to 143 (PASTTASSNVTSASPNP) are compositionally biased toward low complexity. The disordered stretch occupies residues 127-177 (PASTTASSNVTSASPNPLATGPLGVCTMSQTQPDLDHLYSPPPPPPYSGCA). Lysine 246 is subject to N6-acetyllysine; by EP300. Disordered stretches follow at residues 273–301 (GGPSAGTTGPGASGGSEGPRLPGSSAAAA) and 313–336 (RPILRPRKYPNRPSKTPVHERPYP). The segment covering 280–289 (TGPGASGGSE) has biased composition (gly residues). 3 C2H2-type zinc fingers span residues 335 to 359 (YPCPAEGCDRRFSRSDELTRHIRIH), 365 to 387 (FQCRICMRNFSRSDHLTTHIRTH), and 393 to 415 (FACDYCGRKFARSDERKRHTKIH). A disordered region spans residues 406–471 (DERKRHTKIH…GPCSSRTRTP (66 aa)). The segment covering 410–420 (RHTKIHLRQKE) has biased composition (basic residues). The span at 424 to 437 (SAPSSSVPAASTAS) shows a compositional bias: low complexity.

This sequence belongs to the EGR C2H2-type zinc-finger protein family. In terms of assembly, interacts with HCFC1. Interacts with WWP2. Interacts with UBC9. Interacts with CITED1. Interacts (via phosphorylated form) with SFN. Post-translationally, ubiquitinated by WWP2 leading to proteasomal degradation. In terms of processing, acetylated at Lys-246. May be deacetylated by HDAC6, HDAC10 or SIRT1.

It localises to the nucleus. It participates in protein modification; protein sumoylation. Functionally, sequence-specific DNA-binding transcription factor. Plays a role in hindbrain segmentation by regulating the expression of a subset of homeobox containing genes and in Schwann cell myelination by regulating the expression of genes involved in the formation and maintenance of myelin. Binds to two EGR2-consensus sites EGR2A (5'-CTGTAGGAG-3') and EGR2B (5'-ATGTAGGTG-3') in the HOXB3 enhancer and promotes HOXB3 transcriptional activation. Binds to specific DNA sites located in the promoter region of HOXA4, HOXB2 and ERBB2. Regulates hindbrain segmentation by controlling the expression of Hox genes, such as HOXA4, HOXB3 and HOXB2, and thereby specifying odd and even rhombomeres. Promotes the expression of HOXB3 in the rhombomere r5 in the hindbrain. Regulates myelination in the peripheral nervous system after birth, possibly by regulating the expression of myelin proteins, such as MPZ, and by promoting the differentiation of Schwann cells. Involved in the development of the jaw openener musculature, probably by playing a role in its innervation through trigeminal motor neurons. May play a role in adipogenesis, possibly by regulating the expression of CEBPB. In terms of biological role, E3 SUMO-protein ligase helping SUMO1 conjugation to its coregulators NAB1 and NAB2, whose sumoylation down-regulates EGR2 transcriptional activity. The protein is E3 SUMO-protein ligase EGR2 (EGR2) of Sus scrofa (Pig).